Here is a 762-residue protein sequence, read N- to C-terminus: 5-methyltetrahydropteroyltriglutamate--homocysteine methyltransferase (762 aa).

5-methyltetrahydropteroyltri-L-glutamate contacts are provided by residues 18-21 (REWK) and K112. L-homocysteine is bound by residues 435–437 (IGS) and E488. Residues 435 to 437 (IGS) and E488 each bind L-methionine. 5-methyltetrahydropteroyltri-L-glutamate is bound by residues 519–520 (RC) and W565. Position 603 (D603) interacts with L-homocysteine. D603 contacts L-methionine. Position 609 (E609) interacts with 5-methyltetrahydropteroyltri-L-glutamate. H645, C647, and E669 together coordinate Zn(2+). The active-site Proton donor is H698. Residue C730 coordinates Zn(2+).

The protein belongs to the vitamin-B12 independent methionine synthase family. Zn(2+) is required as a cofactor.

The catalysed reaction is 5-methyltetrahydropteroyltri-L-glutamate + L-homocysteine = tetrahydropteroyltri-L-glutamate + L-methionine. It functions in the pathway amino-acid biosynthesis; L-methionine biosynthesis via de novo pathway; L-methionine from L-homocysteine (MetE route): step 1/1. Functionally, catalyzes the transfer of a methyl group from 5-methyltetrahydrofolate to homocysteine resulting in methionine formation. This chain is 5-methyltetrahydropteroyltriglutamate--homocysteine methyltransferase, found in Bacillus velezensis (strain DSM 23117 / BGSC 10A6 / LMG 26770 / FZB42) (Bacillus amyloliquefaciens subsp. plantarum).